Reading from the N-terminus, the 83-residue chain is Cytochrome b559 subunit alpha (83 aa).

A helical membrane pass occupies residues 21-35 (VIHSITVPSLFIAGW). Heme is bound at residue histidine 23.

It belongs to the PsbE/PsbF family. As to quaternary structure, heterodimer of an alpha subunit and a beta subunit. PSII is composed of 1 copy each of membrane proteins PsbA, PsbB, PsbC, PsbD, PsbE, PsbF, PsbH, PsbI, PsbJ, PsbK, PsbL, PsbM, PsbT, PsbX, PsbY, PsbZ, Psb30/Ycf12, at least 3 peripheral proteins of the oxygen-evolving complex and a large number of cofactors. It forms dimeric complexes. Heme b is required as a cofactor.

The protein resides in the plastid. It localises to the chloroplast thylakoid membrane. In terms of biological role, this b-type cytochrome is tightly associated with the reaction center of photosystem II (PSII). PSII is a light-driven water:plastoquinone oxidoreductase that uses light energy to abstract electrons from H(2)O, generating O(2) and a proton gradient subsequently used for ATP formation. It consists of a core antenna complex that captures photons, and an electron transfer chain that converts photonic excitation into a charge separation. In Oltmannsiellopsis viridis (Marine flagellate), this protein is Cytochrome b559 subunit alpha.